The following is a 555-amino-acid chain: CTP synthase (555 aa).

The amidoligase domain stretch occupies residues 1–265 (MTRYIFITGG…GNRVCEKLNI (265 aa)). Ser-13 lines the CTP pocket. Ser-13 is a binding site for UTP. ATP contacts are provided by residues 14–19 (SLGKGI) and Asp-71. Positions 71 and 139 each coordinate Mg(2+). CTP-binding positions include 146–148 (DIE), 186–191 (KTKPTQ), and Lys-222. Residues 186–191 (KTKPTQ) and Lys-222 contribute to the UTP site. In terms of domain architecture, Glutamine amidotransferase type-1 spans 290–541 (TVAVVGKYVD…IKAGLAAKEA (252 aa)). Gly-351 provides a ligand contact to L-glutamine. Residue Cys-378 is the Nucleophile; for glutamine hydrolysis of the active site. L-glutamine-binding positions include 379–382 (LGMQ), Glu-402, and Arg-469. Catalysis depends on residues His-514 and Glu-516.

It belongs to the CTP synthase family. In terms of assembly, homotetramer.

It carries out the reaction UTP + L-glutamine + ATP + H2O = CTP + L-glutamate + ADP + phosphate + 2 H(+). The catalysed reaction is L-glutamine + H2O = L-glutamate + NH4(+). The enzyme catalyses UTP + NH4(+) + ATP = CTP + ADP + phosphate + 2 H(+). Its pathway is pyrimidine metabolism; CTP biosynthesis via de novo pathway; CTP from UDP: step 2/2. Its activity is regulated as follows. Allosterically activated by GTP, when glutamine is the substrate; GTP has no effect on the reaction when ammonia is the substrate. The allosteric effector GTP functions by stabilizing the protein conformation that binds the tetrahedral intermediate(s) formed during glutamine hydrolysis. Inhibited by the product CTP, via allosteric rather than competitive inhibition. Catalyzes the ATP-dependent amination of UTP to CTP with either L-glutamine or ammonia as the source of nitrogen. Regulates intracellular CTP levels through interactions with the four ribonucleotide triphosphates. In Coxiella burnetii (strain Dugway 5J108-111), this protein is CTP synthase.